The chain runs to 139 residues: Protein cornichon homolog 4 (139 aa).

A run of 3 helical transmembrane segments spans residues 5–25, 57–77, and 118–138; these read VFVF…YFII, IVTV…NLPV, and LGFH…ALIN.

Belongs to the cornichon family. As to quaternary structure, interacts with Sec23/24 complex components SEC24B and SEC24D. Interacts with CCR5. Interacts with ADRB2 in the early secretory pathway.

The protein resides in the membrane. It is found in the endoplasmic reticulum. Its subcellular location is the endoplasmic reticulum-Golgi intermediate compartment. In terms of biological role, involved in G protein-coupled receptors (GPCRs) trafficking from the endoplasmic reticulum to the cell surface; it promotes the exit of GPCRs from the early secretory pathway, likely through interaction with the COPII machinery. The chain is Protein cornichon homolog 4 (CNIH4) from Homo sapiens (Human).